We begin with the raw amino-acid sequence, 502 residues long: Glycerol kinase (502 aa).

An ADP-binding site is contributed by Thr14. ATP is bound by residues Thr14, Thr15, and Ser16. Thr14 provides a ligand contact to sn-glycerol 3-phosphate. An ADP-binding site is contributed by Arg18. 4 residues coordinate sn-glycerol 3-phosphate: Arg84, Glu85, Tyr136, and Asp246. Glycerol contacts are provided by Arg84, Glu85, Tyr136, Asp246, and Gln247. ADP-binding residues include Thr268 and Gly311. Residues Thr268, Gly311, Gln315, and Gly412 each coordinate ATP. 2 residues coordinate ADP: Gly412 and Asn416.

Belongs to the FGGY kinase family. Homotetramer and homodimer (in equilibrium). Heterodimer with EIIA-Glc. Binds 1 zinc ion per glycerol kinase EIIA-Glc dimer. The zinc ion is important for dimerization.

The enzyme catalyses glycerol + ATP = sn-glycerol 3-phosphate + ADP + H(+). The protein operates within polyol metabolism; glycerol degradation via glycerol kinase pathway; sn-glycerol 3-phosphate from glycerol: step 1/1. With respect to regulation, activity of this regulatory enzyme is affected by several metabolites. Allosterically and non-competitively inhibited by fructose 1,6-bisphosphate (FBP) and unphosphorylated phosphocarrier protein EIIA-Glc (III-Glc), an integral component of the bacterial phosphotransferase (PTS) system. Key enzyme in the regulation of glycerol uptake and metabolism. Catalyzes the phosphorylation of glycerol to yield sn-glycerol 3-phosphate. This Escherichia coli (strain ATCC 8739 / DSM 1576 / NBRC 3972 / NCIMB 8545 / WDCM 00012 / Crooks) protein is Glycerol kinase.